Reading from the N-terminus, the 139-residue chain is Inactive palmitoleoyl-protein carboxylesterase notum1b (139 aa).

The protein belongs to the pectinacetylesterase family. Notum subfamily.

In terms of biological role, probable inactive palmitoleoyl-protein carboxylesterase. The sequence is that of Inactive palmitoleoyl-protein carboxylesterase notum1b from Danio rerio (Zebrafish).